The primary structure comprises 674 residues: 1,4-alpha-glucan branching enzyme GlgB 1 (674 aa).

Catalysis depends on D336, which acts as the Nucleophile. E389 (proton donor) is an active-site residue.

It belongs to the glycosyl hydrolase 13 family. GlgB subfamily. As to quaternary structure, monomer.

The enzyme catalyses Transfers a segment of a (1-&gt;4)-alpha-D-glucan chain to a primary hydroxy group in a similar glucan chain.. It functions in the pathway glycan biosynthesis; glycogen biosynthesis. Its function is as follows. Catalyzes the formation of the alpha-1,6-glucosidic linkages in glycogen by scission of a 1,4-alpha-linked oligosaccharide from growing alpha-1,4-glucan chains and the subsequent attachment of the oligosaccharide to the alpha-1,6 position. In Clostridium perfringens (strain SM101 / Type A), this protein is 1,4-alpha-glucan branching enzyme GlgB 1.